Here is a 212-residue protein sequence, read N- to C-terminus: 3-isopropylmalate dehydratase small subunit (212 aa).

This sequence belongs to the LeuD family. LeuD type 1 subfamily. As to quaternary structure, heterodimer of LeuC and LeuD.

The enzyme catalyses (2R,3S)-3-isopropylmalate = (2S)-2-isopropylmalate. It functions in the pathway amino-acid biosynthesis; L-leucine biosynthesis; L-leucine from 3-methyl-2-oxobutanoate: step 2/4. In terms of biological role, catalyzes the isomerization between 2-isopropylmalate and 3-isopropylmalate, via the formation of 2-isopropylmaleate. The polypeptide is 3-isopropylmalate dehydratase small subunit (Thioalkalivibrio sulfidiphilus (strain HL-EbGR7)).